The following is a 312-amino-acid chain: DnaJ homolog subfamily B member 7 (312 aa).

Residues 3-69 enclose the J domain; sequence DYYEVLGVQR…EKRDIYDKYG (67 aa). Positions 272-312 are disordered; that stretch reads SWVTNKKEPSIFSAGFKEGGRRKKKKHKEGQKKKKSNKRNH. Over residues 291-312 the composition is skewed to basic residues; sequence GRRKKKKHKEGQKKKKSNKRNH.

Functionally, probably acts as a co-chaperone. The sequence is that of DnaJ homolog subfamily B member 7 (Dnajb7) from Mus musculus (Mouse).